Reading from the N-terminus, the 418-residue chain is Serine--tRNA ligase (418 aa).

231-233 contacts L-serine; sequence TAE. An ATP-binding site is contributed by 262–264; the sequence is RRE. Residue Glu-285 coordinates L-serine. Residue 349–352 coordinates ATP; the sequence is EISS. Ser-384 is a binding site for L-serine.

It belongs to the class-II aminoacyl-tRNA synthetase family. Type-1 seryl-tRNA synthetase subfamily. Homodimer. The tRNA molecule binds across the dimer.

The protein localises to the cytoplasm. The catalysed reaction is tRNA(Ser) + L-serine + ATP = L-seryl-tRNA(Ser) + AMP + diphosphate + H(+). It carries out the reaction tRNA(Sec) + L-serine + ATP = L-seryl-tRNA(Sec) + AMP + diphosphate + H(+). The protein operates within aminoacyl-tRNA biosynthesis; selenocysteinyl-tRNA(Sec) biosynthesis; L-seryl-tRNA(Sec) from L-serine and tRNA(Sec): step 1/1. Its function is as follows. Catalyzes the attachment of serine to tRNA(Ser). Is also able to aminoacylate tRNA(Sec) with serine, to form the misacylated tRNA L-seryl-tRNA(Sec), which will be further converted into selenocysteinyl-tRNA(Sec). The chain is Serine--tRNA ligase from Coprothermobacter proteolyticus (strain ATCC 35245 / DSM 5265 / OCM 4 / BT).